The primary structure comprises 139 residues: Putative nickel-responsive regulator (139 aa).

Ni(2+) is bound by residues His-79, His-90, His-92, and Cys-98.

The protein belongs to the transcriptional regulatory CopG/NikR family. Requires Ni(2+) as cofactor.

In terms of biological role, transcriptional regulator. In Geobacter sulfurreducens (strain ATCC 51573 / DSM 12127 / PCA), this protein is Putative nickel-responsive regulator.